Consider the following 265-residue polypeptide: Short chain dehydrogenase mdpC (265 aa).

NADP(+)-binding residues include Ile25, Asn98, and Arg131. Catalysis depends on proton donor residues Ser147 and Ser148. NADP(+) is bound by residues Tyr162, Lys166, and Thr197. The active-site Proton acceptor is the Tyr162. Lys166 acts as the Lowers pKa of active site Tyr in catalysis.

This sequence belongs to the short-chain dehydrogenases/reductases (SDR) family.

The catalysed reaction is 3,8,9,10-tetrahydroxy-6-methyl-1,4-dihydroanthracen-1-one + NADPH + H(+) = (3R)-3,8,9,10-tetrahydroxy-6-methyl-1,2,3,4-tetrahydroanthracen-1-one + NADP(+). It functions in the pathway secondary metabolite biosynthesis. Functionally, short chain dehydrogenase; part of the gene cluster that mediates the biosynthesis of monodictyphenone, a prenyl xanthone derivative. The pathway begins with the synthesis of atrochrysone thioester by the polyketide synthase (PKS) mdpG. The atrochrysone carboxyl ACP thioesterase mdpF then breaks the thioester bond and releases the atrochrysone carboxylic acid from mdpG. The atrochrysone carboxylic acid is then converted to atrochrysone which is further transformed into emodin anthrone. The next step is performed by the anthrone oxygenase mdpH that catalyzes the oxidation of emodinanthrone to emodin. Emodin is further modified to yield monodictyphenone via several steps involving mdpB, mdpC mdpJ, mdpK and mdpL. The short chain dehydrogenase mdpC converts the tautomers of emodin hydroquinone into the 3-hydroxy-3,4-dihydroan-thracen-1(2H)-one derivative. These enzymes with xptA, xptB and xptC are also proposed to be involved in the synthesis of shamixanthone from emodin. Especially, direct reduction of emodin by the short chain dehydrogenase mdpC followed by dehydration catalyzed by the scytalone dehydratase-like protein mdpB gives loss of oxygen and formation of chrysophanol intermediate in two simple steps. The chain is Short chain dehydrogenase mdpC from Emericella nidulans (strain FGSC A4 / ATCC 38163 / CBS 112.46 / NRRL 194 / M139) (Aspergillus nidulans).